The following is a 137-amino-acid chain: MIWKRHLTLDELNATSLNTMVAHLAIVYTRLGDDVLEAEMPVDARTHQPFGLLHGGASAALAETLGSMAGYLMTRDGQCVVGTELNATHHRAVSQGKVRGVCQPLHLGRQSQSWEIVIFDEQGRRCCTCRLGTAVMG.

E63 (nucleophile or proton acceptor) is an active-site residue.

It belongs to the thioesterase PaaI family. In terms of assembly, homotetramer. Dimer of dimers. Interacts specifically with the aryl carrier protein (ArCP) domain of EntB.

The protein resides in the cytoplasm. Its pathway is siderophore biosynthesis; enterobactin biosynthesis. In terms of biological role, required for optimal enterobactin synthesis. Acts as a proofreading enzyme that prevents EntB misacylation by hydrolyzing the thioester bound existing between EntB and wrongly charged molecules. This chain is Proofreading thioesterase EntH, found in Citrobacter koseri (strain ATCC BAA-895 / CDC 4225-83 / SGSC4696).